The primary structure comprises 65 residues: Large ribosomal subunit protein bL31 (65 aa).

Zn(2+) is bound by residues cysteine 16, cysteine 18, cysteine 36, and cysteine 39.

It belongs to the bacterial ribosomal protein bL31 family. Type A subfamily. As to quaternary structure, part of the 50S ribosomal subunit. The cofactor is Zn(2+).

In terms of biological role, binds the 23S rRNA. This Alkaliphilus metalliredigens (strain QYMF) protein is Large ribosomal subunit protein bL31.